Reading from the N-terminus, the 295-residue chain is Shikimate dehydrogenase (NADP(+)) (295 aa).

Shikimate-binding positions include 24-26 and Thr-71; that span reads SRS. Lys-75 (proton acceptor) is an active-site residue. An NADP(+)-binding site is contributed by Glu-87. Shikimate contacts are provided by Asn-96 and Asp-111. NADP(+) is bound by residues 136–140, 160–165, and Met-233; these read GAGGA and NRTASR. Residue Tyr-235 participates in shikimate binding. Position 256 (Gly-256) interacts with NADP(+).

It belongs to the shikimate dehydrogenase family. In terms of assembly, homodimer.

It carries out the reaction shikimate + NADP(+) = 3-dehydroshikimate + NADPH + H(+). It participates in metabolic intermediate biosynthesis; chorismate biosynthesis; chorismate from D-erythrose 4-phosphate and phosphoenolpyruvate: step 4/7. Its function is as follows. Involved in the biosynthesis of the chorismate, which leads to the biosynthesis of aromatic amino acids. Catalyzes the reversible NADPH linked reduction of 3-dehydroshikimate (DHSA) to yield shikimate (SA). This is Shikimate dehydrogenase (NADP(+)) from Cupriavidus taiwanensis (strain DSM 17343 / BCRC 17206 / CCUG 44338 / CIP 107171 / LMG 19424 / R1) (Ralstonia taiwanensis (strain LMG 19424)).